A 412-amino-acid polypeptide reads, in one-letter code: Putative competence-damage inducible protein (412 aa).

Belongs to the CinA family.

The chain is Putative competence-damage inducible protein from Bacillus anthracis.